The chain runs to 1233 residues: DNA-directed RNA polymerase subunit beta' (1233 aa).

Positions 61, 63, 76, and 79 each coordinate Zn(2+). 3 residues coordinate Mg(2+): D455, D457, and D459. Residues C824, C898, C905, and C908 each contribute to the Zn(2+) site. Basic and acidic residues predominate over residues 1211–1220 (ELQKAFDKEP). Residues 1211 to 1233 (ELQKAFDKEPASSTGNKASNSAK) are disordered. Positions 1221-1233 (ASSTGNKASNSAK) are enriched in polar residues.

Belongs to the RNA polymerase beta' chain family. As to quaternary structure, the RNAP catalytic core consists of 2 alpha, 1 beta, 1 beta' and 1 omega subunit. When a sigma factor is associated with the core the holoenzyme is formed, which can initiate transcription. Mg(2+) is required as a cofactor. It depends on Zn(2+) as a cofactor.

It carries out the reaction RNA(n) + a ribonucleoside 5'-triphosphate = RNA(n+1) + diphosphate. Functionally, DNA-dependent RNA polymerase catalyzes the transcription of DNA into RNA using the four ribonucleoside triphosphates as substrates. The chain is DNA-directed RNA polymerase subunit beta' from Oenococcus oeni (strain ATCC BAA-331 / PSU-1).